Reading from the N-terminus, the 447-residue chain is Ribosomal protein uS12 methylthiotransferase RimO (447 aa).

Residues 4–114 (PKVGFVSLGC…VMEAVHEYVP (111 aa)) enclose the MTTase N-terminal domain. Positions 13, 49, 78, 147, 151, and 154 each coordinate [4Fe-4S] cluster. The Radical SAM core domain maps to 133 to 370 (LTPKHYAYLK…MQVQQEISAA (238 aa)). Positions 373–443 (QKRIGQTMTV…EYDLFAKLIQ (71 aa)) constitute a TRAM domain.

It belongs to the methylthiotransferase family. RimO subfamily. It depends on [4Fe-4S] cluster as a cofactor.

The protein localises to the cytoplasm. It catalyses the reaction L-aspartate(89)-[ribosomal protein uS12]-hydrogen + (sulfur carrier)-SH + AH2 + 2 S-adenosyl-L-methionine = 3-methylsulfanyl-L-aspartate(89)-[ribosomal protein uS12]-hydrogen + (sulfur carrier)-H + 5'-deoxyadenosine + L-methionine + A + S-adenosyl-L-homocysteine + 2 H(+). In terms of biological role, catalyzes the methylthiolation of an aspartic acid residue of ribosomal protein uS12. The sequence is that of Ribosomal protein uS12 methylthiotransferase RimO from Acinetobacter baylyi (strain ATCC 33305 / BD413 / ADP1).